A 533-amino-acid polypeptide reads, in one-letter code: Beta-glucosidase 24 (533 aa).

Residues 1–26 (MVLQKLPLMSIGLLWLLIIVGPLVNA) form the signal peptide. Q58 is a binding site for a beta-D-glucoside. 2 N-linked (GlcNAc...) asparagine glycosylation sites follow: N64 and N88. Residues H161 and 206–207 (NE) each bind a beta-D-glucoside. The Proton donor role is filled by E207. Cysteines 226 and 239 form a disulfide. Y355 lines the a beta-D-glucoside pocket. The N-linked (GlcNAc...) asparagine glycan is linked to N388. A beta-D-glucoside is bound at residue E427. The active-site Nucleophile is E427. Residues N437, N442, and N470 are each glycosylated (N-linked (GlcNAc...) asparagine). A beta-D-glucoside contacts are provided by residues W477, 484-485 (EW), and F493. N-linked (GlcNAc...) asparagine glycosylation is present at N503. A Prevents secretion from ER motif is present at residues 530–533 (KDEL).

The protein belongs to the glycosyl hydrolase 1 family.

It is found in the endoplasmic reticulum lumen. The enzyme catalyses Hydrolysis of terminal, non-reducing beta-D-glucosyl residues with release of beta-D-glucose.. This Arabidopsis thaliana (Mouse-ear cress) protein is Beta-glucosidase 24.